Here is an 887-residue protein sequence, read N- to C-terminus: Fibroblast growth factor receptor 2 (887 aa).

A signal peptide spans 1–18 (MLNKFIVIVTMLAMWNYA). At 19 to 416 (QDCNFELSKN…KDCVGNSYFT (398 aa)) the chain is on the extracellular side. Ig-like C2-type domains follow at residues 22–115 (NFEL…EFIS) and 180–260 (VSGS…LRMK). 9 N-linked (GlcNAc...) asparagine glycosylation sites follow: N28, N74, N93, N230, N261, N268, N328, N334, and N364. Residues C43 and C104 are joined by a disulfide bond. The region spanning 297–387 (FNLNSRVCIN…YACRIINFKD (91 aa)) is the Ig-like C2-type 3 domain. Residues C313 and C380 are joined by a disulfide bond. Residues 417–437 (IIWYSISVGIIILVVISFLII) traverse the membrane as a helical segment. Topologically, residues 438–887 (RLYNKYSNGY…SNQCYSTTIV (450 aa)) are cytoplasmic. Residues 585–862 (LIIGSKIGEG…IIDKLTHIQL (278 aa)) form the Protein kinase domain. ATP-binding positions include 591-599 (IGEGAFGIV) and K619. The Proton acceptor role is filled by D728. The residue at position 757 (Y757) is a Phosphotyrosine; by autocatalysis.

It belongs to the protein kinase superfamily. Tyr protein kinase family. Fibroblast growth factor receptor subfamily. Expressed in brain, stem cells and the mesenchymal cells.

It is found in the membrane. The enzyme catalyses L-tyrosyl-[protein] + ATP = O-phospho-L-tyrosyl-[protein] + ADP + H(+). Functionally, receptor for basic fibroblast growth factor. This chain is Fibroblast growth factor receptor 2 (FGFR2), found in Dugesia japonica (Planarian).